Consider the following 257-residue polypeptide: AT-hook motif nuclear-localized protein 16 (257 aa).

The tract at residues 1–71 (MAGGTALTPT…SKNKPKPPII (71 aa)) is disordered. Residues 53–65 (KRPRGRPAGSKNK) constitute a DNA-binding region (a.T hook). Residues 77–214 (PNSLRANAVE…DEAASMQNQQ (138 aa)) form the PPC domain.

Interacts with FVE/MSI4 and MSI5 which are components of HDAC corepressor complexes. As to expression, preferentially expressed in the inflorescence meristem and young floral buds, as well as in seedling-stage vegetative meristems. Widely expressed in flowers, roots and stems, with relatively low expression in leaves.

It is found in the nucleus. Its function is as follows. Transcription factor that specifically binds AT-rich DNA sequences related to the nuclear matrix attachment regions (MARs). Encodes a nuclear matrix protein that acts in the maintenance of genomic integrity by silencing TEs and repeat-containing genes through epigenetic machinery. Acts as a chromatin remodeling factor that modifies the architecture of FLC and FWA chromatin by modulating both H3 acetylation and methylation leading to the regulation of FLC and FWA expression. Negatively regulates floral repressors including MAF4 and MAF5. Plays a transcription activation role in anther development. Regulates the expression of arabinogalactan proteins (AGPs) involved in the formation of the nexine layer of the pollen wall. Binds AGP6, AGP11, AGP23 and AGP40 promoters. The chain is AT-hook motif nuclear-localized protein 16 from Arabidopsis thaliana (Mouse-ear cress).